The sequence spans 289 residues: Protease HtpX homolog (289 aa).

2 consecutive transmembrane segments (helical) span residues 8-28 (LALLAALSGLLIAISYWVIGG) and 29-49 (SSGLMIGIGLAAVTNLLSWYQ). His-132 provides a ligand contact to Zn(2+). Residue Glu-133 is part of the active site. Residue His-136 participates in Zn(2+) binding. Helical transmembrane passes span 151–171 (VAGAISFLAQMVSYSLWFGGI) and 183–203 (LGVLLTVVLAPIAATIIQLAI). A Zn(2+)-binding site is contributed by Glu-208.

The protein belongs to the peptidase M48B family. Zn(2+) is required as a cofactor.

It is found in the cell inner membrane. This chain is Protease HtpX homolog, found in Nostoc sp. (strain PCC 7120 / SAG 25.82 / UTEX 2576).